A 200-amino-acid polypeptide reads, in one-letter code: 2,3-bisphosphoglycerate-dependent phosphoglycerate mutase (200 aa).

His-9 (tele-phosphohistidine intermediate) is an active-site residue. Residue His-142 is part of the active site.

Belongs to the phosphoglycerate mutase family. As to quaternary structure, homodimer.

It catalyses the reaction (2R)-2-phosphoglycerate = (2R)-3-phosphoglycerate. It functions in the pathway carbohydrate degradation; glycolysis; pyruvate from D-glyceraldehyde 3-phosphate: step 3/5. In terms of biological role, catalyzes the interconversion of 2-phosphoglycerate and 3-phosphoglycerate. This is 2,3-bisphosphoglycerate-dependent phosphoglycerate mutase from Thermoplasma acidophilum (strain ATCC 25905 / DSM 1728 / JCM 9062 / NBRC 15155 / AMRC-C165).